The following is a 474-amino-acid chain: Cysteine--tRNA ligase (474 aa).

Cys27 provides a ligand contact to Zn(2+). Positions 29–39 (PTVYNYIHIGN) match the 'HIGH' region motif. Zn(2+) contacts are provided by Cys212, His237, and Glu241. Positions 271 to 275 (KMSKS) match the 'KMSKS' region motif. Lys274 provides a ligand contact to ATP.

This sequence belongs to the class-I aminoacyl-tRNA synthetase family. Monomer. The cofactor is Zn(2+).

It localises to the cytoplasm. The enzyme catalyses tRNA(Cys) + L-cysteine + ATP = L-cysteinyl-tRNA(Cys) + AMP + diphosphate. This chain is Cysteine--tRNA ligase, found in Lactobacillus delbrueckii subsp. bulgaricus (strain ATCC BAA-365 / Lb-18).